A 253-amino-acid polypeptide reads, in one-letter code: Phosphoribosylaminoimidazole-succinocarboxamide synthase (253 aa).

The protein belongs to the SAICAR synthetase family.

The catalysed reaction is 5-amino-1-(5-phospho-D-ribosyl)imidazole-4-carboxylate + L-aspartate + ATP = (2S)-2-[5-amino-1-(5-phospho-beta-D-ribosyl)imidazole-4-carboxamido]succinate + ADP + phosphate + 2 H(+). Its pathway is purine metabolism; IMP biosynthesis via de novo pathway; 5-amino-1-(5-phospho-D-ribosyl)imidazole-4-carboxamide from 5-amino-1-(5-phospho-D-ribosyl)imidazole-4-carboxylate: step 1/2. The protein is Phosphoribosylaminoimidazole-succinocarboxamide synthase of Roseobacter denitrificans (strain ATCC 33942 / OCh 114) (Erythrobacter sp. (strain OCh 114)).